The following is a 430-amino-acid chain: Histidine--tRNA ligase (430 aa).

Belongs to the class-II aminoacyl-tRNA synthetase family. In terms of assembly, homodimer.

The protein localises to the cytoplasm. The catalysed reaction is tRNA(His) + L-histidine + ATP = L-histidyl-tRNA(His) + AMP + diphosphate + H(+). The sequence is that of Histidine--tRNA ligase from Chlorobium luteolum (strain DSM 273 / BCRC 81028 / 2530) (Pelodictyon luteolum).